A 493-amino-acid polypeptide reads, in one-letter code: Glycerol kinase (493 aa).

Thr11 provides a ligand contact to ADP. 3 residues coordinate ATP: Thr11, Thr12, and Ser13. Thr11 is a binding site for sn-glycerol 3-phosphate. Arg15 lines the ADP pocket. Sn-glycerol 3-phosphate-binding residues include Arg80, Glu81, Tyr132, and Asp241. Glycerol contacts are provided by Arg80, Glu81, Tyr132, Asp241, and Gln242. 2 residues coordinate ADP: Thr263 and Gly306. ATP-binding residues include Thr263, Gly306, Gln310, and Gly408. Gly408 contacts ADP.

This sequence belongs to the FGGY kinase family.

The enzyme catalyses glycerol + ATP = sn-glycerol 3-phosphate + ADP + H(+). Its pathway is polyol metabolism; glycerol degradation via glycerol kinase pathway; sn-glycerol 3-phosphate from glycerol: step 1/1. Its activity is regulated as follows. Inhibited by fructose 1,6-bisphosphate (FBP). Its function is as follows. Key enzyme in the regulation of glycerol uptake and metabolism. Catalyzes the phosphorylation of glycerol to yield sn-glycerol 3-phosphate. In Cereibacter sphaeroides (strain KD131 / KCTC 12085) (Rhodobacter sphaeroides), this protein is Glycerol kinase.